Reading from the N-terminus, the 328-residue chain is MCHQQLVISWFSLVFLASPLMAIWELKKDVYVVELDWYPDAPGEMVVLTCDTPEEDGITWTLDQSGEVLGSGKTLTIQVKEFGDAGQYTCHKGGEALSHSLLLLHKKEDGIWSTDVLKDQKEPKNKTFLRCEAKNYSGRFTCWWLTTISTDLTFSVKSSRGSSNPQGVTCGAVTLSAERVRGDNKEYEYSVECQEDSACPAAEERLPIEVMVDAIHKLKYENYTSSFFIRDIIKPDPPKNLQLKPLKNSRQAEVSWEYPDTWSTPHSYFSLTFCIQVQGKSKREKKDRIFTDKTSATVICRKNASFSVQAQDRYYSSSWSEWASVPCS.

The N-terminal stretch at 1–22 (MCHQQLVISWFSLVFLASPLMA) is a signal peptide. An Ig-like C2-type domain is found at 29–106 (DVYVVELDWY…LSHSLLLLHK (78 aa)). Residues Cys50 and Cys90 are joined by a disulfide bond. 4 N-linked (GlcNAc...) asparagine glycosylation sites follow: Asn125, Asn135, Asn222, and Asn303. The Fibronectin type-III domain maps to 237-328 (PPKNLQLKPL…WSEWASVPCS (92 aa)).

This sequence belongs to the IL-12B family. As to quaternary structure, heterodimer with IL12A; disulfide-linked. The heterodimer is known as interleukin IL-12. Heterodimer with IL23A; disulfide-linked. The heterodimer is known as interleukin IL-23. Also secreted as a monomer. Interacts with NBR1; this interaction promotes IL-12 secretion.

The protein localises to the secreted. Functionally, cytokine that can act as a growth factor for activated T and NK cells, enhance the lytic activity of NK/lymphokine-activated killer cells, and stimulate the production of IFN-gamma by resting PBMC. In terms of biological role, associates with IL23A to form the IL-23 interleukin, a heterodimeric cytokine which functions in innate and adaptive immunity. IL-23 may constitute with IL-17 an acute response to infection in peripheral tissues. IL-23 binds to a heterodimeric receptor complex composed of IL12RB1 and IL23R, activates the Jak-Stat signaling cascade, stimulates memory rather than naive T-cells and promotes production of pro-inflammatory cytokines. IL-23 induces autoimmune inflammation and thus may be responsible for autoimmune inflammatory diseases and may be important for tumorigenesis. The chain is Interleukin-12 subunit beta (IL12B) from Papio anubis (Olive baboon).